Consider the following 535-residue polypeptide: Glucose-6-phosphate isomerase (535 aa).

E359 acts as the Proton donor in catalysis. Catalysis depends on residues H390 and K505.

This sequence belongs to the GPI family.

The protein resides in the cytoplasm. The enzyme catalyses alpha-D-glucose 6-phosphate = beta-D-fructose 6-phosphate. Its pathway is carbohydrate biosynthesis; gluconeogenesis. It functions in the pathway carbohydrate degradation; glycolysis; D-glyceraldehyde 3-phosphate and glycerone phosphate from D-glucose: step 2/4. In terms of biological role, catalyzes the reversible isomerization of glucose-6-phosphate to fructose-6-phosphate. This chain is Glucose-6-phosphate isomerase, found in Treponema pallidum (strain Nichols).